Consider the following 423-residue polypeptide: COP9 signalosome complex subunit 3 (423 aa).

Positions 197-365 constitute a PCI domain; the sequence is NFERAMYFYE…GMVCFHDSPE (169 aa). Residues 401 to 410 show a composition bias toward polar residues; that stretch reads PQFVQKSMGS. The segment at 401-423 is disordered; the sequence is PQFVQKSMGSQEDDSGSKPSSYS.

It belongs to the CSN3 family. In terms of assembly, component of the CSN complex, probably composed of cops1, cops2, cops3, cops4, cops5, cops6, cops7, cops8 and cops9.

It is found in the cytoplasm. It localises to the nucleus. Its function is as follows. Component of the COP9 signalosome complex (CSN), a complex involved in various cellular and developmental processes. The CSN complex is an essential regulator of the ubiquitin (Ubl) conjugation pathway by mediating the deneddylation of the cullin subunits of E3 ligase complexes, leading to modify the Ubl ligase activity. The polypeptide is COP9 signalosome complex subunit 3 (cops3) (Xenopus laevis (African clawed frog)).